A 602-amino-acid polypeptide reads, in one-letter code: RecBCD enzyme subunit RecD (602 aa).

Residue 174–181 participates in ATP binding; it reads GGPGTGKT.

This sequence belongs to the RecD family. As to quaternary structure, heterotrimer of RecB, RecC and RecD. All subunits contribute to DNA-binding.

It carries out the reaction Couples ATP hydrolysis with the unwinding of duplex DNA at the replication fork by translocating in the 5'-3' direction. This creates two antiparallel DNA single strands (ssDNA). The leading ssDNA polymer is the template for DNA polymerase III holoenzyme which synthesizes a continuous strand.. The catalysed reaction is ATP + H2O = ADP + phosphate + H(+). A helicase/nuclease that prepares dsDNA breaks (DSB) for recombinational DNA repair. Binds to DSBs and unwinds DNA via a highly rapid and processive ATP-dependent bidirectional helicase activity. Unwinds dsDNA until it encounters a Chi (crossover hotspot instigator) sequence from the 3' direction. Cuts ssDNA a few nucleotides 3' to the Chi site. The properties and activities of the enzyme are changed at Chi. The Chi-altered holoenzyme produces a long 3'-ssDNA overhang and facilitates RecA-binding to the ssDNA for homologous DNA recombination and repair. Holoenzyme degrades any linearized DNA that is unable to undergo homologous recombination. In the holoenzyme this subunit has ssDNA-dependent ATPase and 5'-3' helicase activity. When added to pre-assembled RecBC greatly stimulates nuclease activity and augments holoenzyme processivity. Negatively regulates the RecA-loading ability of RecBCD. The chain is RecBCD enzyme subunit RecD from Buchnera aphidicola subsp. Schizaphis graminum (strain Sg).